The sequence spans 339 residues: MLRLDKFKKYPLTFGATPIEHLPRLTAALGGKVQIYAKRDDCNSGLAMGGNKLRKLEYIVPDAIESNADTLVSIGGVQSNHTRMVAATAAKIGMKCVVVQESWVPHEDAVYDRVGNILMTRLMGADSRIVPDGFDIGIRKSWEDAIQSVKDAGGKPYGIPAGASVHKFGGLGYVGFAEEVRAQEAEMGIKFDYIIVCVVTGSTQAGMIVGFAADGRADRVIGIDASGTPEQTRTQVRQIVDNTAELVELGRKVRDDEIVILEDYAYPAYGVPSAETNEAIRLAARTEAMITDPVYEGKSMQGMIDLVKKGYFPEGSKVLYAHLGGAPAINGYSYTYRNG.

Residue Lys-52 is modified to N6-(pyridoxal phosphate)lysine. The active-site Nucleophile is the Ser-79.

This sequence belongs to the ACC deaminase/D-cysteine desulfhydrase family. Homotrimer. Pyridoxal 5'-phosphate is required as a cofactor.

It catalyses the reaction 1-aminocyclopropane-1-carboxylate + H2O = 2-oxobutanoate + NH4(+). Its function is as follows. Catalyzes a cyclopropane ring-opening reaction, the irreversible conversion of 1-aminocyclopropane-1-carboxylate (ACC) to ammonia and alpha-ketobutyrate. Allows growth on ACC as a nitrogen source. This Bradyrhizobium sp. (strain BTAi1 / ATCC BAA-1182) protein is 1-aminocyclopropane-1-carboxylate deaminase.